Consider the following 367-residue polypeptide: Undecaprenyl-phosphate alpha-N-acetylglucosaminyl 1-phosphate transferase (367 aa).

The next 10 helical transmembrane spans lie at 3–23 (LLTV…FLFF), 46–66 (LIPL…FGIV), 69–89 (YIPH…IGAL), 132–152 (VLGP…INAF), 158–178 (IDGL…MILW), 187–207 (IWCF…LGIL), 213–233 (VFMG…ILLE), 242–262 (ISPV…VAIM), 294–314 (AFVL…LAEY), and 318–338 (VPEW…GYCI).

It belongs to the glycosyltransferase 4 family. WecA subfamily. Requires Mg(2+) as cofactor. It depends on Mn(2+) as a cofactor.

The protein localises to the cell inner membrane. It carries out the reaction di-trans,octa-cis-undecaprenyl phosphate + UDP-N-acetyl-alpha-D-glucosamine = N-acetyl-alpha-D-glucosaminyl-di-trans,octa-cis-undecaprenyl diphosphate + UMP. The protein operates within bacterial outer membrane biogenesis; LPS O-antigen biosynthesis. Its pathway is bacterial outer membrane biogenesis; enterobacterial common antigen biosynthesis. Functionally, catalyzes the transfer of the GlcNAc-1-phosphate moiety from UDP-GlcNAc onto the carrier lipid undecaprenyl phosphate (C55-P), yielding GlcNAc-pyrophosphoryl-undecaprenyl (GlcNAc-PP-C55). In Escherichia coli O6:H1 (strain CFT073 / ATCC 700928 / UPEC), this protein is Undecaprenyl-phosphate alpha-N-acetylglucosaminyl 1-phosphate transferase.